The primary structure comprises 390 residues: Putative 2-isopropylmalate synthase (390 aa).

The region spanning 5 to 267 (IIIFDTTLRD…KTNIKYQEIY (263 aa)) is the Pyruvate carboxyltransferase domain. Mn(2+)-binding residues include Asp-14, His-202, His-204, and Asn-238.

Belongs to the alpha-IPM synthase/homocitrate synthase family. LeuA type 1 subfamily. Homodimer. Requires Mn(2+) as cofactor.

Its subcellular location is the cytoplasm. The enzyme catalyses 3-methyl-2-oxobutanoate + acetyl-CoA + H2O = (2S)-2-isopropylmalate + CoA + H(+). Its pathway is amino-acid biosynthesis; L-leucine biosynthesis; L-leucine from 3-methyl-2-oxobutanoate: step 1/4. Functionally, catalyzes the condensation of the acetyl group of acetyl-CoA with 3-methyl-2-oxobutanoate (2-ketoisovalerate) to form 3-carboxy-3-hydroxy-4-methylpentanoate (2-isopropylmalate). In Buchnera aphidicola subsp. Baizongia pistaciae (strain Bp), this protein is Putative 2-isopropylmalate synthase.